The sequence spans 88 residues: Beta-insect excitatory toxin BmKIT1 (88 aa).

Residues 1–18 form the signal peptide; it reads MKFFLIFLVIFPIMGVLG. The LCN-type CS-alpha/beta domain maps to 20-83; that stretch reads KNGYAVDSSG…IKDATKSYCD (64 aa). Disulfide bonds link C34–C55, C40–C60, C44–C62, and C56–C82. Isoleucine amide is present on I87.

It belongs to the long (4 C-C) scorpion toxin superfamily. Sodium channel inhibitor family. Beta subfamily. As to expression, expressed by the venom gland.

It localises to the secreted. Its function is as follows. Excitatory insect beta-toxins induce a spastic paralysis. They bind voltage-independently at site-4 of sodium channels (Nav) and shift the voltage of activation toward more negative potentials thereby affecting sodium channel activation and promoting spontaneous and repetitive firing. This toxin is active only on insects. The polypeptide is Beta-insect excitatory toxin BmKIT1 (Olivierus martensii (Manchurian scorpion)).